The sequence spans 232 residues: Thiamine import ATP-binding protein ThiQ (232 aa).

The ABC transporter domain occupies 2–230 (LKLTDITWLY…KASASALLGI (229 aa)). 32-39 (GPSGAGKS) is an ATP binding site.

It belongs to the ABC transporter superfamily. Thiamine importer (TC 3.A.1.19.1) family. The complex is composed of two ATP-binding proteins (ThiQ), two transmembrane proteins (ThiP) and a solute-binding protein (ThiB).

It is found in the cell inner membrane. The enzyme catalyses thiamine(out) + ATP + H2O = thiamine(in) + ADP + phosphate + H(+). Functionally, part of the ABC transporter complex ThiBPQ involved in thiamine import. Responsible for energy coupling to the transport system. The chain is Thiamine import ATP-binding protein ThiQ from Escherichia coli O6:K15:H31 (strain 536 / UPEC).